The primary structure comprises 141 residues: Nucleoside diphosphate kinase (141 aa).

ATP contacts are provided by Lys-11, Phe-59, Arg-87, Thr-93, Arg-104, and Asn-114. His-117 acts as the Pros-phosphohistidine intermediate in catalysis.

This sequence belongs to the NDK family. In terms of assembly, homotetramer. Requires Mg(2+) as cofactor.

It is found in the cytoplasm. The enzyme catalyses a 2'-deoxyribonucleoside 5'-diphosphate + ATP = a 2'-deoxyribonucleoside 5'-triphosphate + ADP. The catalysed reaction is a ribonucleoside 5'-diphosphate + ATP = a ribonucleoside 5'-triphosphate + ADP. Functionally, major role in the synthesis of nucleoside triphosphates other than ATP. The ATP gamma phosphate is transferred to the NDP beta phosphate via a ping-pong mechanism, using a phosphorylated active-site intermediate. This is Nucleoside diphosphate kinase from Acidithiobacillus ferrooxidans (strain ATCC 53993 / BNL-5-31) (Leptospirillum ferrooxidans (ATCC 53993)).